The chain runs to 147 residues: Secreted hemophore CSA2 (147 aa).

The signal sequence occupies residues 1–20; that stretch reads MKFSTILAIPFAIAFANAAA. The CFEM domain maps to 34–145; the sequence is NPYTIYPPVP…SALDAAATAT (112 aa). Cystine bridges form between cysteine 62–cysteine 102, cysteine 66–cysteine 97, cysteine 76–cysteine 83, and cysteine 85–cysteine 118. Aspartate 80 serves as a coordination point for heme.

It belongs to the RBT5 family. In terms of assembly, homodimer. The possibility of a transient honotrimer assembly of the holo protein is not ruled out.

It localises to the secreted. In terms of biological role, secreted heme-binding protein involved in the utilization of iron from human hemoglobin during hyphal growth. May also play a role in non-hemoglobin iron utilization. Heme transfer occurs between PGA7, RBT5 and CSA2 supporting a model in which the 3 CFEM proteins cooperate in a heme-acquisition system and form a cross-cell wall heme-transfer cascade. The ability to acquire iron from host tissues is a major virulence factor of pathogenic microorganisms. This is Secreted hemophore CSA2 (CSA2) from Candida albicans (strain SC5314 / ATCC MYA-2876) (Yeast).